The following is a 263-amino-acid chain: uncharacterized protein (263 aa).

A signal peptide spans 1-22 (MRYLKRVVLYRIVMVLSVFIIG). Cysteine 23 carries the N-palmitoyl cysteine lipid modification. Cysteine 23 carries S-diacylglycerol cysteine lipidation.

Belongs to the staphylococcal tandem lipoprotein family.

The protein resides in the cell membrane. This is an uncharacterized protein from Staphylococcus aureus (strain bovine RF122 / ET3-1).